Consider the following 421-residue polypeptide: Acetate kinase (421 aa).

Asn-7 lines the Mg(2+) pocket. Lys-14 contributes to the ATP binding site. Position 91 (Arg-91) interacts with substrate. The Proton donor/acceptor role is filled by Asp-148. Residues 208–212 (HIGNG) and 283–285 (DRR) each bind ATP. Glu-387 provides a ligand contact to Mg(2+).

Belongs to the acetokinase family. As to quaternary structure, homodimer. Requires Mg(2+) as cofactor. It depends on Mn(2+) as a cofactor.

Its subcellular location is the cytoplasm. It catalyses the reaction acetate + ATP = acetyl phosphate + ADP. The protein operates within metabolic intermediate biosynthesis; acetyl-CoA biosynthesis; acetyl-CoA from acetate: step 1/2. Catalyzes the formation of acetyl phosphate from acetate and ATP. Can also catalyze the reverse reaction. This chain is Acetate kinase, found in Geobacter sulfurreducens (strain ATCC 51573 / DSM 12127 / PCA).